The chain runs to 958 residues: Valine--tRNA ligase (958 aa).

The 'HIGH' region motif lies at 42–52; it reads PNVTGSLHMGH. The short motif at 554-558 is the 'KMSKS' region element; it reads KMSKS. Residue Lys557 coordinates ATP. Residues 887–956 are a coiled coil; the sequence is LVDVAAEMAR…TEQKAEFAKL (70 aa).

The protein belongs to the class-I aminoacyl-tRNA synthetase family. ValS type 1 subfamily. In terms of assembly, monomer.

It localises to the cytoplasm. The enzyme catalyses tRNA(Val) + L-valine + ATP = L-valyl-tRNA(Val) + AMP + diphosphate. Catalyzes the attachment of valine to tRNA(Val). As ValRS can inadvertently accommodate and process structurally similar amino acids such as threonine, to avoid such errors, it has a 'posttransfer' editing activity that hydrolyzes mischarged Thr-tRNA(Val) in a tRNA-dependent manner. In Shewanella oneidensis (strain ATCC 700550 / JCM 31522 / CIP 106686 / LMG 19005 / NCIMB 14063 / MR-1), this protein is Valine--tRNA ligase.